A 184-amino-acid chain; its full sequence is Large ribosomal subunit protein bL17 (184 aa).

The segment at 126-184 (TRAARAAASKQTADEAQVEETPAEEVTEETAAEETTEAAQADEAPAEEAPVEEKKDEEK) is disordered. The span at 141 to 161 (AQVEETPAEEVTEETAAEETT) shows a compositional bias: acidic residues.

The protein belongs to the bacterial ribosomal protein bL17 family. Part of the 50S ribosomal subunit. Contacts protein L32.

The protein is Large ribosomal subunit protein bL17 of Corynebacterium efficiens (strain DSM 44549 / YS-314 / AJ 12310 / JCM 11189 / NBRC 100395).